The primary structure comprises 202 residues: Glycerol-3-phosphate acyltransferase (202 aa).

6 helical membrane-spanning segments follow: residues 2-22 (MIVV…GYVI), 54-74 (FIVT…PIWF), 85-105 (FFTH…YPIY), 120-140 (VVLG…FGVL), 141-161 (YIFK…VIGS), and 162-182 (LIIQ…ILIV).

This sequence belongs to the PlsY family. Probably interacts with PlsX.

It localises to the cell membrane. The catalysed reaction is an acyl phosphate + sn-glycerol 3-phosphate = a 1-acyl-sn-glycero-3-phosphate + phosphate. It functions in the pathway lipid metabolism; phospholipid metabolism. Catalyzes the transfer of an acyl group from acyl-phosphate (acyl-PO(4)) to glycerol-3-phosphate (G3P) to form lysophosphatidic acid (LPA). This enzyme utilizes acyl-phosphate as fatty acyl donor, but not acyl-CoA or acyl-ACP. In Staphylococcus haemolyticus (strain JCSC1435), this protein is Glycerol-3-phosphate acyltransferase.